Reading from the N-terminus, the 459-residue chain is Argininosuccinate lyase (459 aa).

This sequence belongs to the lyase 1 family. Argininosuccinate lyase subfamily.

It is found in the cytoplasm. The catalysed reaction is 2-(N(omega)-L-arginino)succinate = fumarate + L-arginine. The protein operates within amino-acid biosynthesis; L-arginine biosynthesis; L-arginine from L-ornithine and carbamoyl phosphate: step 3/3. The polypeptide is Argininosuccinate lyase (Chromobacterium violaceum (strain ATCC 12472 / DSM 30191 / JCM 1249 / CCUG 213 / NBRC 12614 / NCIMB 9131 / NCTC 9757 / MK)).